The chain runs to 517 residues: Ribose import ATP-binding protein RbsA 2 (517 aa).

ABC transporter domains follow at residues leucine 10–isoleucine 245 and aspartate 255–histidine 498. Glycine 42–serine 49 provides a ligand contact to ATP. A disordered region spans residues threonine 497–histidine 517.

Belongs to the ABC transporter superfamily. Ribose importer (TC 3.A.1.2.1) family. The complex is composed of an ATP-binding protein (RbsA), two transmembrane proteins (RbsC) and a solute-binding protein (RbsB).

It is found in the cell membrane. The enzyme catalyses D-ribose(out) + ATP + H2O = D-ribose(in) + ADP + phosphate + H(+). Part of the ABC transporter complex RbsABC involved in ribose import. Responsible for energy coupling to the transport system. The chain is Ribose import ATP-binding protein RbsA 2 from Streptomyces coelicolor (strain ATCC BAA-471 / A3(2) / M145).